Reading from the N-terminus, the 251-residue chain is Phosphate import ATP-binding protein PstB (251 aa).

The ABC transporter domain occupies Ile-5–Ile-246. An ATP-binding site is contributed by Gly-37–Ser-44.

Belongs to the ABC transporter superfamily. Phosphate importer (TC 3.A.1.7) family. In terms of assembly, the complex is composed of two ATP-binding proteins (PstB), two transmembrane proteins (PstC and PstA) and a solute-binding protein (PstS).

It is found in the cell membrane. The catalysed reaction is phosphate(out) + ATP + H2O = ADP + 2 phosphate(in) + H(+). Its function is as follows. Part of the ABC transporter complex PstSACB involved in phosphate import. Responsible for energy coupling to the transport system. This is Phosphate import ATP-binding protein PstB from Dehalococcoides mccartyi (strain ATCC BAA-2266 / KCTC 15142 / 195) (Dehalococcoides ethenogenes (strain 195)).